Consider the following 289-residue polypeptide: MKKEQVLIEALPYIREFYDSIMVIKIGGSIMTNHEILENFIQDIILLKYIGIHPVVVHGGGPEISETMKRLGKKAEFVAGLRVTDRETLEIARMVLLGNINAELVSLIGKHGGKGIGLSGKDGMLIVARKKPPMNVNGENVDLGYVGEVEEINPEILMITAGKGYIPVISPIAIDRDGNSLNVNADTVAGAVAVALRAKKLISITDVEGVREDPDDPGRVISQFSPSEFQRLVERGIIKGGMIPKVEACVRAVERGVEKAHIIDGRIPHAIILELLTDAGIGTMISNIT.

Substrate-binding positions include 60-61 (GG), arginine 82, and asparagine 182.

It belongs to the acetylglutamate kinase family. ArgB subfamily.

The protein resides in the cytoplasm. The catalysed reaction is N-acetyl-L-glutamate + ATP = N-acetyl-L-glutamyl 5-phosphate + ADP. The protein operates within amino-acid biosynthesis; L-arginine biosynthesis; N(2)-acetyl-L-ornithine from L-glutamate: step 2/4. Functionally, catalyzes the ATP-dependent phosphorylation of N-acetyl-L-glutamate. The chain is Acetylglutamate kinase from Methanothrix thermoacetophila (strain DSM 6194 / JCM 14653 / NBRC 101360 / PT) (Methanosaeta thermophila).